A 164-amino-acid chain; its full sequence is Phosphopantetheine adenylyltransferase (164 aa).

S9 lines the substrate pocket. ATP is bound by residues 9-10 and H17; that span reads SF. Substrate contacts are provided by K41, L73, and K87. ATP-binding positions include 88–90, E98, and 123–129; these read GLR and NSFLSSS.

This sequence belongs to the bacterial CoaD family. Homohexamer. Mg(2+) serves as cofactor.

It is found in the cytoplasm. The catalysed reaction is (R)-4'-phosphopantetheine + ATP + H(+) = 3'-dephospho-CoA + diphosphate. It functions in the pathway cofactor biosynthesis; coenzyme A biosynthesis; CoA from (R)-pantothenate: step 4/5. Its function is as follows. Reversibly transfers an adenylyl group from ATP to 4'-phosphopantetheine, yielding dephospho-CoA (dPCoA) and pyrophosphate. This Clostridium kluyveri (strain ATCC 8527 / DSM 555 / NBRC 12016 / NCIMB 10680 / K1) protein is Phosphopantetheine adenylyltransferase.